The primary structure comprises 335 residues: Ferrochelatase (335 aa).

Residues His194 and Glu275 each coordinate Fe cation.

This sequence belongs to the ferrochelatase family.

It localises to the cytoplasm. It carries out the reaction heme b + 2 H(+) = protoporphyrin IX + Fe(2+). Its pathway is porphyrin-containing compound metabolism; protoheme biosynthesis; protoheme from protoporphyrin-IX: step 1/1. In terms of biological role, catalyzes the ferrous insertion into protoporphyrin IX. This Sodalis glossinidius (strain morsitans) protein is Ferrochelatase.